The primary structure comprises 123 residues: MAEIAAQLVSVERPLWVGTATSVTAQTTEGEIGVLPGHEPLLGQLVENGVVTIRTNTGEKLVAAVQGGFLSVSSEKITILADSATWASEVNVADAESRKQSAETEHDKAVAESELRAVKRMEA.

The disordered stretch occupies residues 96-123 (ESRKQSAETEHDKAVAESELRAVKRMEA).

Belongs to the ATPase epsilon chain family. F-type ATPases have 2 components, CF(1) - the catalytic core - and CF(0) - the membrane proton channel. CF(1) has five subunits: alpha(3), beta(3), gamma(1), delta(1), epsilon(1). CF(0) has three main subunits: a, b and c.

It localises to the cell membrane. In terms of biological role, produces ATP from ADP in the presence of a proton gradient across the membrane. This is ATP synthase epsilon chain from Corynebacterium jeikeium (strain K411).